Here is a 435-residue protein sequence, read N- to C-terminus: U-box domain-containing protein 21 (435 aa).

Positions 30–104 (TIPPEFQCPI…QGWCVEKGSP (75 aa)) constitute a U-box domain. ARM repeat units follow at residues 202-241 (LEGISKLASATSFRCVAGLLKSTDDSVRQNAAFIMKEILS), 245-285 (TRVH…QMVL), 288-327 (PEIASEFLEIGLVSITVEMIVDAENSVCEKALAVLDAICE), and 329-369 (EHGR…KLWK).

It catalyses the reaction S-ubiquitinyl-[E2 ubiquitin-conjugating enzyme]-L-cysteine + [acceptor protein]-L-lysine = [E2 ubiquitin-conjugating enzyme]-L-cysteine + N(6)-ubiquitinyl-[acceptor protein]-L-lysine.. Its pathway is protein modification; protein ubiquitination. Functions as an E3 ubiquitin ligase. In Arabidopsis thaliana (Mouse-ear cress), this protein is U-box domain-containing protein 21 (PUB21).